A 511-amino-acid chain; its full sequence is Frizzled/smoothened-like sans CRD protein C (511 aa).

The first 25 residues, 1–25, serve as a signal peptide directing secretion; the sequence is MNQINKFIKNLYLIIITIILIIVIS. Over 26–93 the chain is Extracellular; the sequence is NDNNGLFING…QWESYFEMSL (68 aa). Residue N51 is glycosylated (N-linked (GlcNAc...) asparagine). The chain crosses the membrane as a helical span at residues 94–114; that stretch reads IMGSISMFASLFLIITYSPLI. Residues 115–122 lie on the Cytoplasmic side of the membrane; that stretch reads NKKHTRHT. A helical membrane pass occupies residues 123 to 143; sequence VGILCMSIGIFFVMVSDGRQL. Residues 144-172 are Extracellular-facing; that stretch reads WDIESPGEYKKYCPDTGRYARQSDTKCLT. Residues 173-193 form a helical membrane-spanning segment; it reads TGLFFQFGCVTAIGWWSILAV. Residues 194–209 lie on the Cytoplasmic side of the membrane; the sequence is DLWMTIAKKVQTTKKQ. Residues 210 to 230 traverse the membrane as a helical segment; sequence LLYYLIGINTVSLILTFGPVV. Over 231–253 the chain is Extracellular; sequence KNQYGFGNAAIGCWMLDLKYQYG. A helical transmembrane segment spans residues 254–274; the sequence is FFWIPVGICLSVGSVFIGLIF. At 275–295 the chain is on the cytoplasmic side; that stretch reads WEIYKISDAVKKRYLKKHIKP. Residues 296-316 form a helical membrane-spanning segment; the sequence is LCLIVLMCLEFLYMFIYYSYI. Residues 317–357 are Extracellular-facing; sequence TANQPTYNKHVAEYIMCLIINAANVPGSYTCQLKTVSPTAQ. Residues 358-378 form a helical membrane-spanning segment; that stretch reads FLFLIAIRLMGLQGLIFYGLT. The Cytoplasmic segment spans residues 379–511; that stretch reads AATKKVWANS…RVNSPDNLQP (133 aa). Residues 430–511 form a disordered region; the sequence is NGYTTGGSDN…RVNSPDNLQP (82 aa). Positions 433 to 443 are enriched in gly residues; that stretch reads TTGGSDNGVGS. Polar residues predominate over residues 451 to 460; the sequence is KSSSNGGAQD. The span at 461-485 shows a compositional bias: low complexity; sequence NNNNNNNNNNNNNNNNNNNNNNNNN. Polar residues predominate over residues 486–511; the sequence is SSSLEISGVESNNSTPRVNSPDNLQP.

This sequence belongs to the G-protein coupled receptor Fz/Smo family.

The protein resides in the membrane. The polypeptide is Frizzled/smoothened-like sans CRD protein C (fscC) (Dictyostelium discoideum (Social amoeba)).